Here is a 414-residue protein sequence, read N- to C-terminus: Lipoyl synthase, mitochondrial (414 aa).

The transit peptide at 1–31 (MAVSTSHFRSLCASRPLSRTAIVGHISCRSY) directs the protein to the mitochondrion. A disordered region spans residues 31-51 (YATTEPSPSATSTSTTTTARR). The segment covering 32–48 (ATTEPSPSATSTSTTTT) has biased composition (low complexity). 7 residues coordinate [4Fe-4S] cluster: C131, C136, C142, C162, C166, C169, and S377. Residues 145–366 (GSDKSAATAT…RQRALDMGFL (222 aa)) enclose the Radical SAM core domain.

This sequence belongs to the radical SAM superfamily. Lipoyl synthase family. It depends on [4Fe-4S] cluster as a cofactor.

The protein resides in the mitochondrion. The catalysed reaction is [[Fe-S] cluster scaffold protein carrying a second [4Fe-4S](2+) cluster] + N(6)-octanoyl-L-lysyl-[protein] + 2 oxidized [2Fe-2S]-[ferredoxin] + 2 S-adenosyl-L-methionine + 4 H(+) = [[Fe-S] cluster scaffold protein] + N(6)-[(R)-dihydrolipoyl]-L-lysyl-[protein] + 4 Fe(3+) + 2 hydrogen sulfide + 2 5'-deoxyadenosine + 2 L-methionine + 2 reduced [2Fe-2S]-[ferredoxin]. Its pathway is protein modification; protein lipoylation via endogenous pathway; protein N(6)-(lipoyl)lysine from octanoyl-[acyl-carrier-protein]: step 2/2. Catalyzes the radical-mediated insertion of two sulfur atoms into the C-6 and C-8 positions of the octanoyl moiety bound to the lipoyl domains of lipoate-dependent enzymes, thereby converting the octanoylated domains into lipoylated derivatives. This chain is Lipoyl synthase, mitochondrial, found in Aspergillus fumigatus (strain CBS 144.89 / FGSC A1163 / CEA10) (Neosartorya fumigata).